Here is a 445-residue protein sequence, read N- to C-terminus: Argininosuccinate synthase (445 aa).

ATP-binding positions include 17-25 (AFSGGLDTS) and Ala43. Tyr99 contacts L-citrulline. ATP is bound by residues Gly129 and Thr131. Positions 131, 135, and 136 each coordinate L-aspartate. Asn135 provides a ligand contact to L-citrulline. Asp136 is an ATP binding site. Positions 139 and 192 each coordinate L-citrulline. ATP is bound at residue Asp194. Residues Thr201, Glu203, and Glu280 each contribute to the L-citrulline site.

It belongs to the argininosuccinate synthase family. Type 2 subfamily. Homotetramer.

The protein localises to the cytoplasm. The enzyme catalyses L-citrulline + L-aspartate + ATP = 2-(N(omega)-L-arginino)succinate + AMP + diphosphate + H(+). It participates in amino-acid biosynthesis; L-arginine biosynthesis; L-arginine from L-ornithine and carbamoyl phosphate: step 2/3. The protein is Argininosuccinate synthase of Bordetella petrii (strain ATCC BAA-461 / DSM 12804 / CCUG 43448).